The chain runs to 292 residues: Protoheme IX farnesyltransferase (292 aa).

Helical transmembrane passes span 15–35, 49–69, 104–124, 147–167, 171–191, 218–238, 242–262, and 271–291; these read YLVL…LGGM, FWTL…NMVI, VFSL…LVAL, IGGI…SGSV, AIAL…VLAL, TLLY…TGLV, YFVV…KFFF, and LFFF…VDMV.

It belongs to the UbiA prenyltransferase family. Protoheme IX farnesyltransferase subfamily.

Its subcellular location is the cell inner membrane. The enzyme catalyses heme b + (2E,6E)-farnesyl diphosphate + H2O = Fe(II)-heme o + diphosphate. The protein operates within porphyrin-containing compound metabolism; heme O biosynthesis; heme O from protoheme: step 1/1. Converts heme B (protoheme IX) to heme O by substitution of the vinyl group on carbon 2 of heme B porphyrin ring with a hydroxyethyl farnesyl side group. This is Protoheme IX farnesyltransferase from Aquifex aeolicus (strain VF5).